The primary structure comprises 234 residues: Isoprenyl transferase (234 aa).

The active site involves D13. Position 13 (D13) interacts with Mg(2+). Substrate-binding positions include 14 to 17 (GNGR), W18, R26, H30, and 58 to 60 (STE). Residue N61 is the Proton acceptor of the active site. Substrate contacts are provided by residues W62, R64, R180, and 186-188 (RLS). E199 contributes to the Mg(2+) binding site.

Belongs to the UPP synthase family. Homodimer. Mg(2+) serves as cofactor.

Catalyzes the condensation of isopentenyl diphosphate (IPP) with allylic pyrophosphates generating different type of terpenoids. In Helicobacter pylori (strain J99 / ATCC 700824) (Campylobacter pylori J99), this protein is Isoprenyl transferase.